An 831-amino-acid polypeptide reads, in one-letter code: uncharacterized protein (831 aa).

Positions 1–146 (MDIFDSTITS…RAFSILSGVA (146 aa)) constitute a CID domain. Disordered regions lie at residues 205–233 (SSSS…SSIS), 265–354 (KEHF…NYNN), 434–480 (IGNS…NEDS), and 572–831 (CGAD…SNRH). Composition is skewed to low complexity over residues 272 to 354 (NDTS…NYNN) and 434 to 477 (IGNS…NNNN). Basic and acidic residues-rich tracts occupy residues 592–601 (NENKQNDSHR) and 611–813 (SRGE…RSKE). The segment covering 817 to 831 (NNDNRSSSNRSSNRH) has biased composition (low complexity).

This is an uncharacterized protein from Dictyostelium discoideum (Social amoeba).